We begin with the raw amino-acid sequence, 285 residues long: Diphthine methyl ester synthase (285 aa).

S-adenosyl-L-methionine is bound by residues Leu-9, Asp-84, Gly-87, 112 to 113, Leu-163, Val-221, and His-246; that span reads SI.

It belongs to the diphthine synthase family.

The protein localises to the cytoplasm. It carries out the reaction 2-[(3S)-amino-3-carboxypropyl]-L-histidyl-[translation elongation factor 2] + 4 S-adenosyl-L-methionine = diphthine methyl ester-[translation elongation factor 2] + 4 S-adenosyl-L-homocysteine + 3 H(+). It participates in protein modification; peptidyl-diphthamide biosynthesis. S-adenosyl-L-methionine-dependent methyltransferase that catalyzes four methylations of the modified target histidine residue in translation elongation factor 2 (EF-2), to form an intermediate called diphthine methyl ester. The four successive methylation reactions represent the second step of diphthamide biosynthesis. The polypeptide is Diphthine methyl ester synthase (dph5) (Aspergillus fumigatus (strain ATCC MYA-4609 / CBS 101355 / FGSC A1100 / Af293) (Neosartorya fumigata)).